Consider the following 147-residue polypeptide: Leech anti-platelet protein (147 aa).

The signal sequence occupies residues 1-21 (MNSFLFSLACSLLVAIPAISA). Residues 21–71 (AQDEDAGGAGDETSEGEDTTGSDETPSTGGGGDGGNEETITAGNEDCWSKR) are disordered. The segment covering 22–41 (QDEDAGGAGDETSEGEDTTG) has biased composition (acidic residues). 3 disulfides stabilise this stretch: cysteine 67–cysteine 145, cysteine 92–cysteine 117, and cysteine 96–cysteine 105.

The N-terminus is blocked. Expressed by salivary glands.

The protein resides in the secreted. In terms of biological role, inhibits collagen-stimulated platelet aggregation (IC(50)=60 nM), dense granule release and serotonin release. Does not inhibit platelet aggregation induced by ADP, arachidonic acid, and thrombin. This is Leech anti-platelet protein from Haementeria officinalis (Mexican leech).